An 85-amino-acid polypeptide reads, in one-letter code: RKRLFYRYYSHPGNYMYLGHYGRYYNMLHNCNAMLLAHQMQAMRRYQHRMRVKQMYRRIKMKQMYRHMKWMGMYRQAKAARLRCI.

It belongs to the turripeptide family. As to expression, expressed by the venom duct.

It is found in the secreted. Functionally, is lethal to drosophila larvae. This is Turripeptide PaIAa from Polystira albida (White giant-turris).